Here is a 285-residue protein sequence, read N- to C-terminus: Nucleotide-binding protein PSPPH_4154 (285 aa).

8 to 15 (GRSGSGKS) is an ATP binding site. 60–63 (DARN) lines the GTP pocket.

It belongs to the RapZ-like family.

Displays ATPase and GTPase activities. This chain is Nucleotide-binding protein PSPPH_4154, found in Pseudomonas savastanoi pv. phaseolicola (strain 1448A / Race 6) (Pseudomonas syringae pv. phaseolicola (strain 1448A / Race 6)).